The primary structure comprises 637 residues: Glutathione hydrolase 3 (637 aa).

Residues 28–48 (LKISLLLLLILLATSGYYSFS) form a helical membrane-spanning segment. A glycan (N-linked (GlcNAc...) asparagine) is linked at asparagine 50. Residue arginine 147 participates in L-glutamate binding. Asparagine 271, asparagine 374, and asparagine 398 each carry an N-linked (GlcNAc...) asparagine glycan. The active-site Nucleophile is the threonine 418. Residues threonine 436, asparagine 438, glutamate 457, aspartate 460, 488 to 489 (SS), and 509 to 510 (GG) contribute to the L-glutamate site. A glycan (N-linked (GlcNAc...) asparagine) is linked at asparagine 553.

This sequence belongs to the gamma-glutamyltransferase family. As to expression, expressed in roots, cotyledons, leaves, flowers and siliques.

It is found in the vacuole membrane. The catalysed reaction is an N-terminal (5-L-glutamyl)-[peptide] + an alpha-amino acid = 5-L-glutamyl amino acid + an N-terminal L-alpha-aminoacyl-[peptide]. The enzyme catalyses glutathione + H2O = L-cysteinylglycine + L-glutamate. It carries out the reaction an S-substituted glutathione + H2O = an S-substituted L-cysteinylglycine + L-glutamate. It participates in sulfur metabolism; glutathione metabolism. Functionally, may play a role in protecting plants from some xenobiotic chemicals by degrading vacuolar glutathione conjugates into cysteine conjugates. The chain is Glutathione hydrolase 3 (GGT3) from Arabidopsis thaliana (Mouse-ear cress).